The primary structure comprises 246 residues: Flavin-dependent thymidylate synthase (246 aa).

The ThyX domain maps to 17-241 (VTVELVKHSA…PLTYAAFNTN (225 aa)). FAD is bound by residues serine 69, 92-94 (RHR), and glutamate 101. Residues 89-92 (EFMR), 101-105 (EESGR), and arginine 173 contribute to the dUMP site. Positions 92-103 (RHRVGWSYNEES) match the ThyX motif motif. Residues 189–191 (NAR) and histidine 195 contribute to the FAD site. Arginine 200 is a dUMP binding site. Arginine 200 (involved in ionization of N3 of dUMP, leading to its activation) is an active-site residue.

This sequence belongs to the thymidylate synthase ThyX family. As to quaternary structure, homotetramer. Requires FAD as cofactor.

It catalyses the reaction dUMP + (6R)-5,10-methylene-5,6,7,8-tetrahydrofolate + NADPH + H(+) = dTMP + (6S)-5,6,7,8-tetrahydrofolate + NADP(+). It functions in the pathway pyrimidine metabolism; dTTP biosynthesis. In terms of biological role, catalyzes the reductive methylation of 2'-deoxyuridine-5'-monophosphate (dUMP) to 2'-deoxythymidine-5'-monophosphate (dTMP) while utilizing 5,10-methylenetetrahydrofolate (mTHF) as the methyl donor, and NADPH and FADH(2) as the reductant. This chain is Flavin-dependent thymidylate synthase, found in Streptomyces avermitilis (strain ATCC 31267 / DSM 46492 / JCM 5070 / NBRC 14893 / NCIMB 12804 / NRRL 8165 / MA-4680).